The chain runs to 385 residues: Probable tRNA sulfurtransferase (385 aa).

In terms of domain architecture, THUMP spans 57–161; sequence NESIKRLSNV…NKNAYVWSNK (105 aa). Residues 181 to 182, 206 to 207, arginine 263, glycine 285, and glutamine 294 contribute to the ATP site; these read ML and YY.

This sequence belongs to the ThiI family.

The protein resides in the cytoplasm. It carries out the reaction [ThiI sulfur-carrier protein]-S-sulfanyl-L-cysteine + a uridine in tRNA + 2 reduced [2Fe-2S]-[ferredoxin] + ATP + H(+) = [ThiI sulfur-carrier protein]-L-cysteine + a 4-thiouridine in tRNA + 2 oxidized [2Fe-2S]-[ferredoxin] + AMP + diphosphate. The catalysed reaction is [ThiS sulfur-carrier protein]-C-terminal Gly-Gly-AMP + S-sulfanyl-L-cysteinyl-[cysteine desulfurase] + AH2 = [ThiS sulfur-carrier protein]-C-terminal-Gly-aminoethanethioate + L-cysteinyl-[cysteine desulfurase] + A + AMP + 2 H(+). Its pathway is cofactor biosynthesis; thiamine diphosphate biosynthesis. Functionally, catalyzes the ATP-dependent transfer of a sulfur to tRNA to produce 4-thiouridine in position 8 of tRNAs, which functions as a near-UV photosensor. Also catalyzes the transfer of sulfur to the sulfur carrier protein ThiS, forming ThiS-thiocarboxylate. This is a step in the synthesis of thiazole, in the thiamine biosynthesis pathway. The sulfur is donated as persulfide by IscS. In Clostridium botulinum (strain Alaska E43 / Type E3), this protein is Probable tRNA sulfurtransferase.